We begin with the raw amino-acid sequence, 428 residues long: MAKIVDIKGREVLDSRGNPTVEADVLLDNGIIGSACAPSGASTGSREALELRDGDKSRYMGKGVLKAVANINGPIRDLLLGKDPVDQKALDHAMIELDGTENKASLGANAILAVSLAAAKAAAQDQDLPLYAHIANLNGTPGVYSMPVPMMNIINGGEHADNNIDIQEFMIQPVGAKSFAEGLRWGTEIFHHLKAVLKARGLNTAVGDEGGFAPNLASNKEALDAIAEAVANAGYTLGTDVTLALDCAASEFYKNGKYKLSEEGEYSSAEFAEYLAELTRKHPIISIEDGLDESDWDGWKILTDKIGEKTQLVGDDLFVTNTKILKEGIDKKIANSILIKFNQIGTLTETLEAIQMAKAAGYTAIISHRSGETEDSTIADLAVGTSAGQIKTGSLCRSDRVSKYNQLLRIEEQLGSKAVYRGRAEFRG.

Gln167 serves as a coordination point for (2R)-2-phosphoglycerate. Glu209 acts as the Proton donor in catalysis. Mg(2+) contacts are provided by Asp246, Glu288, and Asp315. The (2R)-2-phosphoglycerate site is built by Lys340, Arg369, Ser370, and Lys391. The active-site Proton acceptor is the Lys340.

It belongs to the enolase family. Component of the RNA degradosome, a multiprotein complex involved in RNA processing and mRNA degradation. Mg(2+) serves as cofactor.

It is found in the cytoplasm. It localises to the secreted. Its subcellular location is the cell surface. It carries out the reaction (2R)-2-phosphoglycerate = phosphoenolpyruvate + H2O. It participates in carbohydrate degradation; glycolysis; pyruvate from D-glyceraldehyde 3-phosphate: step 4/5. Its function is as follows. Catalyzes the reversible conversion of 2-phosphoglycerate (2-PG) into phosphoenolpyruvate (PEP). It is essential for the degradation of carbohydrates via glycolysis. The protein is Enolase 1 of Pseudomonas syringae pv. syringae (strain B728a).